Consider the following 223-residue polypeptide: Adenylate kinase (223 aa).

10 to 15 (GSGKGT) is an ATP binding site. The tract at residues 30–59 (ESGAIFREHIGGGTELGKKAKAYIDRGDLV) is NMP. Residues Ser-31, Arg-36, 57-59 (DLV), 84-87 (GFPR), and Gln-91 contribute to the AMP site. The tract at residues 125 to 164 (GRRLCKNNNNHPNNIFIEAIKPNGDVCRVCGGTLSSRSDD) is LID. An ATP-binding site is contributed by Arg-126. The AMP site is built by Arg-161 and Arg-173. Gly-209 is a binding site for ATP.

The protein belongs to the adenylate kinase family. In terms of assembly, monomer.

The protein localises to the cytoplasm. The catalysed reaction is AMP + ATP = 2 ADP. It participates in purine metabolism; AMP biosynthesis via salvage pathway; AMP from ADP: step 1/1. Its function is as follows. Catalyzes the reversible transfer of the terminal phosphate group between ATP and AMP. Plays an important role in cellular energy homeostasis and in adenine nucleotide metabolism. The protein is Adenylate kinase of Desulfovibrio desulfuricans (strain ATCC 27774 / DSM 6949 / MB).